A 398-amino-acid polypeptide reads, in one-letter code: Ornithine aminotransferase (398 aa).

N6-(pyridoxal phosphate)lysine is present on K256.

It belongs to the class-III pyridoxal-phosphate-dependent aminotransferase family. OAT subfamily. Pyridoxal 5'-phosphate is required as a cofactor.

The protein resides in the cytoplasm. It catalyses the reaction a 2-oxocarboxylate + L-ornithine = L-glutamate 5-semialdehyde + an L-alpha-amino acid. It functions in the pathway amino-acid biosynthesis; L-proline biosynthesis; L-glutamate 5-semialdehyde from L-ornithine: step 1/1. Functionally, catalyzes the interconversion of ornithine to glutamate semialdehyde. The sequence is that of Ornithine aminotransferase from Halalkalibacterium halodurans (strain ATCC BAA-125 / DSM 18197 / FERM 7344 / JCM 9153 / C-125) (Bacillus halodurans).